Reading from the N-terminus, the 164-residue chain is Protein-export protein SecB (164 aa).

This sequence belongs to the SecB family. In terms of assembly, homotetramer, a dimer of dimers. One homotetramer interacts with 1 SecA dimer.

It localises to the cytoplasm. Functionally, one of the proteins required for the normal export of preproteins out of the cell cytoplasm. It is a molecular chaperone that binds to a subset of precursor proteins, maintaining them in a translocation-competent state. It also specifically binds to its receptor SecA. The polypeptide is Protein-export protein SecB (Stutzerimonas stutzeri (strain A1501) (Pseudomonas stutzeri)).